The following is an 861-amino-acid chain: Bifunctional uridylyltransferase/uridylyl-removing enzyme (861 aa).

The interval 1–321 is uridylyltransferase; that stretch reads MKNDNRIIKN…VYHQKQKIIR (321 aa). Residues 322-678 are uridylyl-removing; it reads LDDEFQLSNR…IMPHHSQGGT (357 aa). The HD domain occupies 440–562; sequence VDQHTLFVIR…LPHARYLDYL (123 aa). 2 ACT domains span residues 679 to 760 and 788 to 861; these read EVFI…AVSR and QLFL…KSKY.

This sequence belongs to the GlnD family. The cofactor is Mg(2+).

The enzyme catalyses [protein-PII]-L-tyrosine + UTP = [protein-PII]-uridylyl-L-tyrosine + diphosphate. The catalysed reaction is [protein-PII]-uridylyl-L-tyrosine + H2O = [protein-PII]-L-tyrosine + UMP + H(+). Uridylyltransferase (UTase) activity is inhibited by glutamine, while glutamine activates uridylyl-removing (UR) activity. Modifies, by uridylylation and deuridylylation, the PII regulatory proteins (GlnB and homologs), in response to the nitrogen status of the cell that GlnD senses through the glutamine level. Under low glutamine levels, catalyzes the conversion of the PII proteins and UTP to PII-UMP and PPi, while under higher glutamine levels, GlnD hydrolyzes PII-UMP to PII and UMP (deuridylylation). Thus, controls uridylylation state and activity of the PII proteins, and plays an important role in the regulation of nitrogen assimilation and metabolism. This chain is Bifunctional uridylyltransferase/uridylyl-removing enzyme, found in Legionella pneumophila subsp. pneumophila (strain Philadelphia 1 / ATCC 33152 / DSM 7513).